The following is a 137-amino-acid chain: Large ribosomal subunit protein uL16 (137 aa).

It belongs to the universal ribosomal protein uL16 family. In terms of assembly, part of the 50S ribosomal subunit.

Functionally, binds 23S rRNA and is also seen to make contacts with the A and possibly P site tRNAs. The protein is Large ribosomal subunit protein uL16 of Streptococcus pyogenes serotype M1.